Here is a 356-residue protein sequence, read N- to C-terminus: HORMA domain-containing protein 1 (356 aa).

Positions 24 to 225 constitute an HORMA domain; sequence QQSLVLVKKL…TPFHSIKMNV (202 aa). 2 disordered regions span residues 282 to 305 and 333 to 356; these read ETQE…PKMD and QLEF…SVPK. Residues 288 to 298 show a composition bias toward basic and acidic residues; it reads EQPHRHTKEDF. Residues 347 to 356 are compositionally biased toward basic residues; sequence PKRRKVSVPK.

The protein resides in the nucleus. Its subcellular location is the chromosome. Its function is as follows. Plays a key role in meiotic progression by ensuring that sufficient numbers of processed DNA double-strand breaks (DSBs) are available for successful homology search, promoting synaptonemal-complex formation independently and playing key role in the male mid-pachytene checkpoint and the female meiotic prophase checkpoint. The chain is HORMA domain-containing protein 1 (hormad1) from Danio rerio (Zebrafish).